Reading from the N-terminus, the 93-residue chain is uncharacterized protein (93 aa).

This is an uncharacterized protein from Acidianus sp. F28 (AFV-2).